The sequence spans 347 residues: Selenide, water dikinase (347 aa).

The active site involves C17. ATP is bound by residues K20 and T48–D50. Residue D51 coordinates Mg(2+). Residues D68, D91, and G139–S141 contribute to the ATP site. D91 is a Mg(2+) binding site. D227 contacts Mg(2+).

It belongs to the selenophosphate synthase 1 family. Class I subfamily. As to quaternary structure, homodimer. Requires Mg(2+) as cofactor.

The enzyme catalyses hydrogenselenide + ATP + H2O = selenophosphate + AMP + phosphate + 2 H(+). Functionally, synthesizes selenophosphate from selenide and ATP. The polypeptide is Selenide, water dikinase (Escherichia coli O157:H7).